The sequence spans 124 residues: Glycine cleavage system H protein (124 aa).

A Lipoyl-binding domain is found at 22–104; sequence LVITGITDHA…YGKGWIYKIK (83 aa). Residue Lys63 is modified to N6-lipoyllysine.

Belongs to the GcvH family. The glycine cleavage system is composed of four proteins: P, T, L and H. It depends on (R)-lipoate as a cofactor.

The glycine cleavage system catalyzes the degradation of glycine. The H protein shuttles the methylamine group of glycine from the P protein to the T protein. The polypeptide is Glycine cleavage system H protein (Acinetobacter baumannii (strain ACICU)).